The chain runs to 455 residues: Na(+)/H(+) antiporter NhaA (455 aa).

The next 11 helical transmembrane spans lie at 31 to 51 (ASGI…NSPW), 83 to 103 (GLMS…VLIG), 113 to 133 (FPLI…LLCV), 141 to 161 (GWGI…ILLG), 170 to 190 (VFVT…IALF), 198 to 218 (VSLL…LLGI), 231 to 251 (IWAA…LLAF), 309 to 329 (GLQP…NAGV), 345 to 365 (IGVA…FAWL), 383 to 403 (IFGA…IASL), and 414 to 434 (SKIG…VVLW).

This sequence belongs to the NhaA Na(+)/H(+) (TC 2.A.33) antiporter family.

It localises to the cell inner membrane. It carries out the reaction Na(+)(in) + 2 H(+)(out) = Na(+)(out) + 2 H(+)(in). Its function is as follows. Na(+)/H(+) antiporter that extrudes sodium in exchange for external protons. This Koribacter versatilis (strain Ellin345) protein is Na(+)/H(+) antiporter NhaA.